Reading from the N-terminus, the 738-residue chain is Junction plakoglobin (738 aa).

12 ARM repeats span residues N128 to K167, K168 to H211, R212 to L251, E254 to Y293, G294 to C337, P338 to D377, A379 to C416, G419 to S460, E466 to L506, P508 to T547, P570 to Q609, and K611 to R657.

It belongs to the beta-catenin family. In terms of assembly, homodimer.

It localises to the cell junction. It is found in the adherens junction. Its subcellular location is the desmosome. The protein localises to the cytoplasm. The protein resides in the cytoskeleton. It localises to the membrane. Common junctional plaque protein. The membrane-associated plaques are architectural elements in an important strategic position to influence the arrangement and function of both the cytoskeleton and the cells within the tissue. The presence of plakoglobin in both the desmosomes and in the intermediate junctions suggests that it plays a central role in the structure and function of submembranous plaques. The chain is Junction plakoglobin (jup) from Xenopus laevis (African clawed frog).